The following is a 312-amino-acid chain: Malate dehydrogenase (312 aa).

NAD(+) contacts are provided by residues 7–13 (GAAGGIG) and aspartate 34. 2 residues coordinate substrate: arginine 81 and arginine 87. Residues asparagine 94 and 117–119 (ITN) contribute to the NAD(+) site. 2 residues coordinate substrate: asparagine 119 and arginine 153. Histidine 177 functions as the Proton acceptor in the catalytic mechanism. Residue methionine 227 coordinates NAD(+).

This sequence belongs to the LDH/MDH superfamily. MDH type 1 family. As to quaternary structure, homodimer.

It carries out the reaction (S)-malate + NAD(+) = oxaloacetate + NADH + H(+). Catalyzes the reversible oxidation of malate to oxaloacetate. The protein is Malate dehydrogenase of Klebsiella pneumoniae (strain 342).